Here is a 158-residue protein sequence, read N- to C-terminus: uncharacterized protein (158 aa).

The next 3 helical transmembrane spans lie at 45-65 (GIFFQVVGAILVFGAYLPAVI), 76-96 (LAIGMWIISIAGLGLLAIFAW), and 106-126 (FILVALSETLSCIASIIVFAL).

It to U.parvum UU007, UU041 and UU042.

Its subcellular location is the cell membrane. This is an uncharacterized protein from Ureaplasma parvum serovar 3 (strain ATCC 700970).